The sequence spans 186 residues: Ribosome-recycling factor (186 aa).

It belongs to the RRF family.

Its subcellular location is the cytoplasm. Responsible for the release of ribosomes from messenger RNA at the termination of protein biosynthesis. May increase the efficiency of translation by recycling ribosomes from one round of translation to another. This chain is Ribosome-recycling factor, found in Leifsonia xyli subsp. xyli (strain CTCB07).